Reading from the N-terminus, the 1007-residue chain is A disintegrin and metalloproteinase with thrombospondin motifs 1 (1007 aa).

An N-terminal signal peptide occupies residues 1–20 (MPCCLWAALSLLLAVVGAGA). N-linked (GlcNAc...) asparagine glycans are attached at residues asparagine 130 and asparagine 228. Residues 184–370 (LWLELAIVAD…WSSCSKEQFH (187 aa)) form the Peptidase M12B domain. Histidine 322 serves as a coordination point for Zn(2+). The Metal-binding motif lies at 322–333 (HELAHLLGLTHD). Glutamate 323 is an active-site residue. Histidine 326 and histidine 332 together coordinate Zn(2+). Cystine bridges form between cysteine 338–cysteine 364, cysteine 494–cysteine 530, cysteine 498–cysteine 536, and cysteine 509–cysteine 520. Positions 482–537 (TPEWGDWEEWSACNADCGYGLRTRTRKCKYRGFVSESACEGAGSQVATCWAGSSCA) constitute a TSP type-1 1 domain. Residues asparagine 561, asparagine 610, asparagine 626, asparagine 737, asparagine 777, and asparagine 865 are each glycosylated (N-linked (GlcNAc...) asparagine). TSP type-1 domains follow at residues 833-899 (CEFV…NRIP) and 900-952 (CPVY…RRCP). 3 cysteine pairs are disulfide-bonded: cysteine 912–cysteine 946, cysteine 916–cysteine 951, and cysteine 927–cysteine 935.

Requires Zn(2+) as cofactor.

It is found in the secreted. Its subcellular location is the extracellular space. The protein resides in the extracellular matrix. Involved in larval molting and metamorphosis. May degrade extracellular matrix (ECM) and basement membrane (BM) during the development of organs to allow degeneration and remodeling of tissues. This chain is A disintegrin and metalloproteinase with thrombospondin motifs 1, found in Bombyx mori (Silk moth).